A 156-amino-acid chain; its full sequence is MALEKSLVLLPLFVLMLLVLGWVQPSLGKESRAKKFQRQHMDSDSSPSSNSTYCNQMMRRRNMTQGRCKPVNTFVHEPLVDVQNVCFQEKVTCKNGQANCYKSNSSMHITDCRLTNGSRYPNCAYRTSPKERHIIVACEGSPYVPVHFDASVEDST.

The N-terminal stretch at 1 to 28 (MALEKSLVLLPLFVLMLLVLGWVQPSLG) is a signal peptide. Lys-35 and Arg-38 together coordinate substrate. His-40 functions as the Proton acceptor in the catalytic mechanism. N-linked (GlcNAc...) asparagine glycosylation is found at Asn-50 and Asn-62. 4 disulfides stabilise this stretch: Cys-54-Cys-112, Cys-68-Cys-123, Cys-86-Cys-138, and Cys-93-Cys-100. Substrate-binding positions include 69 to 73 (KPVNT) and Lys-94. A glycan (N-linked (GlcNAc...) asparagine) is linked at Asn-104. Substrate is bound at residue Arg-113. N-linked (GlcNAc...) asparagine glycosylation occurs at Asn-116. His-147 serves as the catalytic Proton donor.

The protein belongs to the pancreatic ribonuclease family. In terms of assembly, monomer. Interacts with and forms tight 1:1 complexes with RNH1. Dimerization of two such complexes may occur. Interaction with RNH1 inhibits this protein.

It localises to the secreted. It carries out the reaction an [RNA] containing cytidine + H2O = an [RNA]-3'-cytidine-3'-phosphate + a 5'-hydroxy-ribonucleotide-3'-[RNA].. The catalysed reaction is an [RNA] containing uridine + H2O = an [RNA]-3'-uridine-3'-phosphate + a 5'-hydroxy-ribonucleotide-3'-[RNA].. Its function is as follows. Endonuclease that catalyzes the cleavage of RNA on the 3' side of pyrimidine nucleotides. Acts on single-stranded and double-stranded RNA. The chain is Ribonuclease pancreatic (RNASE1) from Nomascus leucogenys (Northern white-cheeked gibbon).